Reading from the N-terminus, the 91-residue chain is Small ribosomal subunit protein eS24 (91 aa).

The interval 51 to 91 is disordered; the sequence is QRRKDAAAHKEAYNAMPEAERRHLNSEKYANRKAEVSYKHR.

This sequence belongs to the eukaryotic ribosomal protein eS24 family.

This chain is Small ribosomal subunit protein eS24, found in Caenorhabditis elegans.